The chain runs to 265 residues: Undecaprenyl-diphosphatase (265 aa).

The next 7 helical transmembrane spans lie at 38–58, 80–100, 107–127, 135–155, 178–198, 216–236, and 244–264; these read SDMF…IIYW, LIVA…LGFE, PIAW…WAAA, ITWL…VFPG, TEFA…YELL, IAFV…LAYI, and FAIY…TGLI.

It belongs to the UppP family.

It is found in the cell inner membrane. The enzyme catalyses di-trans,octa-cis-undecaprenyl diphosphate + H2O = di-trans,octa-cis-undecaprenyl phosphate + phosphate + H(+). Its function is as follows. Catalyzes the dephosphorylation of undecaprenyl diphosphate (UPP). Confers resistance to bacitracin. The sequence is that of Undecaprenyl-diphosphatase from Rhizobium johnstonii (strain DSM 114642 / LMG 32736 / 3841) (Rhizobium leguminosarum bv. viciae).